The following is a 183-amino-acid chain: ATP synthase subunit delta (183 aa).

This sequence belongs to the ATPase delta chain family. In terms of assembly, F-type ATPases have 2 components, F(1) - the catalytic core - and F(0) - the membrane proton channel. F(1) has five subunits: alpha(3), beta(3), gamma(1), delta(1), epsilon(1). F(0) has three main subunits: a(1), b(2) and c(10-14). The alpha and beta chains form an alternating ring which encloses part of the gamma chain. F(1) is attached to F(0) by a central stalk formed by the gamma and epsilon chains, while a peripheral stalk is formed by the delta and b chains.

It is found in the cell inner membrane. Functionally, f(1)F(0) ATP synthase produces ATP from ADP in the presence of a proton or sodium gradient. F-type ATPases consist of two structural domains, F(1) containing the extramembraneous catalytic core and F(0) containing the membrane proton channel, linked together by a central stalk and a peripheral stalk. During catalysis, ATP synthesis in the catalytic domain of F(1) is coupled via a rotary mechanism of the central stalk subunits to proton translocation. Its function is as follows. This protein is part of the stalk that links CF(0) to CF(1). It either transmits conformational changes from CF(0) to CF(1) or is implicated in proton conduction. The polypeptide is ATP synthase subunit delta (Thermosipho africanus (strain TCF52B)).